The chain runs to 491 residues: Ketol-acid reductoisomerase (NADP(+)) (491 aa).

Residues 15–208 (AQLGKCRFMG…GGHRAGVLES (194 aa)) enclose the KARI N-terminal Rossmann domain. Residues 45 to 48 (CGAQ), Arg-68, Arg-76, Ser-78, and 108 to 110 (DKQ) each bind NADP(+). His-132 is a catalytic residue. NADP(+) is bound at residue Gly-158. KARI C-terminal knotted domains lie at 209–344 (SFVA…TAPQ) and 345–484 (YEGK…MTDM). 4 residues coordinate Mg(2+): Asp-217, Glu-221, Glu-389, and Glu-393. Position 414 (Ser-414) interacts with substrate.

Belongs to the ketol-acid reductoisomerase family. Mg(2+) is required as a cofactor.

It catalyses the reaction (2R)-2,3-dihydroxy-3-methylbutanoate + NADP(+) = (2S)-2-acetolactate + NADPH + H(+). The enzyme catalyses (2R,3R)-2,3-dihydroxy-3-methylpentanoate + NADP(+) = (S)-2-ethyl-2-hydroxy-3-oxobutanoate + NADPH + H(+). The protein operates within amino-acid biosynthesis; L-isoleucine biosynthesis; L-isoleucine from 2-oxobutanoate: step 2/4. Its pathway is amino-acid biosynthesis; L-valine biosynthesis; L-valine from pyruvate: step 2/4. In terms of biological role, involved in the biosynthesis of branched-chain amino acids (BCAA). Catalyzes an alkyl-migration followed by a ketol-acid reduction of (S)-2-acetolactate (S2AL) to yield (R)-2,3-dihydroxy-isovalerate. In the isomerase reaction, S2AL is rearranged via a Mg-dependent methyl migration to produce 3-hydroxy-3-methyl-2-ketobutyrate (HMKB). In the reductase reaction, this 2-ketoacid undergoes a metal-dependent reduction by NADPH to yield (R)-2,3-dihydroxy-isovalerate. In Escherichia fergusonii (strain ATCC 35469 / DSM 13698 / CCUG 18766 / IAM 14443 / JCM 21226 / LMG 7866 / NBRC 102419 / NCTC 12128 / CDC 0568-73), this protein is Ketol-acid reductoisomerase (NADP(+)).